A 382-amino-acid polypeptide reads, in one-letter code: Alkanesulfonate monooxygenase (382 aa).

The protein belongs to the SsuD family.

The enzyme catalyses an alkanesulfonate + FMNH2 + O2 = an aldehyde + FMN + sulfite + H2O + 2 H(+). Catalyzes the desulfonation of aliphatic sulfonates. The protein is Alkanesulfonate monooxygenase of Pseudomonas putida (strain W619).